We begin with the raw amino-acid sequence, 179 residues long: Large ribosomal subunit protein uL5 (179 aa).

Belongs to the universal ribosomal protein uL5 family. Part of the 50S ribosomal subunit; part of the 5S rRNA/L5/L18/L25 subcomplex. Contacts the 5S rRNA and the P site tRNA. Forms a bridge to the 30S subunit in the 70S ribosome.

Its function is as follows. This is one of the proteins that bind and probably mediate the attachment of the 5S RNA into the large ribosomal subunit, where it forms part of the central protuberance. In the 70S ribosome it contacts protein S13 of the 30S subunit (bridge B1b), connecting the 2 subunits; this bridge is implicated in subunit movement. Contacts the P site tRNA; the 5S rRNA and some of its associated proteins might help stabilize positioning of ribosome-bound tRNAs. The polypeptide is Large ribosomal subunit protein uL5 (Rickettsia felis (strain ATCC VR-1525 / URRWXCal2) (Rickettsia azadi)).